A 59-amino-acid chain; its full sequence is KNKCQLPSDVGKGKASFTRYFYNEESGKCETFIYGGMGGNSNNFLTKEACCRECAQGSC.

Residues 4-54 form the BPTI/Kunitz inhibitor domain; sequence CQLPSDVGKGKASFTRYFYNEESGKCETFIYGGMGGNSNNFLTKEACCREC. 3 disulfide bridges follow: Cys-4–Cys-54, Cys-29–Cys-50, and Cys-51–Cys-59.

This sequence belongs to the venom Kunitz-type family. Scorpion delta-Ktx subfamily. Delta-Ktx 2 sub-subfamily. Expressed by the venom gland.

It is found in the secreted. Its function is as follows. Serine protease inhibitor that inhibits trypsin at a molar ratio of 1:1 (Ki=124 nM). The protein is Kunitz-type serine protease inhibitor LmKTT-1c of Lychas mucronatus (Chinese swimming scorpion).